Consider the following 132-residue polypeptide: Small ribosomal subunit protein uS8 (132 aa).

It belongs to the universal ribosomal protein uS8 family. Part of the 30S ribosomal subunit. Contacts proteins S5 and S12.

Functionally, one of the primary rRNA binding proteins, it binds directly to 16S rRNA central domain where it helps coordinate assembly of the platform of the 30S subunit. The chain is Small ribosomal subunit protein uS8 from Borrelia hermsii (strain HS1 / DAH).